The primary structure comprises 414 residues: L-cysteine:1D-myo-inositol 2-amino-2-deoxy-alpha-D-glucopyranoside ligase (414 aa).

Position 43 (Cys-43) interacts with Zn(2+). Residues 43–46 (CGIT), Thr-58, and 81–83 (NVT) each bind L-cysteinyl-5'-AMP. A 'HIGH' region motif is present at residues 45 to 55 (ITPYDATHLGH). The short motif at 187-192 (ERGGDP) is the 'ERGGDP' region element. Residue Trp-227 coordinates L-cysteinyl-5'-AMP. A Zn(2+)-binding site is contributed by Cys-231. 249-251 (GSD) is an L-cysteinyl-5'-AMP binding site. Residue His-256 participates in Zn(2+) binding. Ile-283 provides a ligand contact to L-cysteinyl-5'-AMP. Residues 289–293 (KMSKS) carry the 'KMSKS' region motif.

This sequence belongs to the class-I aminoacyl-tRNA synthetase family. MshC subfamily. As to quaternary structure, monomer. Requires Zn(2+) as cofactor.

It carries out the reaction 1D-myo-inositol 2-amino-2-deoxy-alpha-D-glucopyranoside + L-cysteine + ATP = 1D-myo-inositol 2-(L-cysteinylamino)-2-deoxy-alpha-D-glucopyranoside + AMP + diphosphate + H(+). In terms of biological role, catalyzes the ATP-dependent condensation of GlcN-Ins and L-cysteine to form L-Cys-GlcN-Ins. This Tsukamurella paurometabola (strain ATCC 8368 / DSM 20162 / CCUG 35730 / CIP 100753 / JCM 10117 / KCTC 9821 / NBRC 16120 / NCIMB 702349 / NCTC 13040) (Corynebacterium paurometabolum) protein is L-cysteine:1D-myo-inositol 2-amino-2-deoxy-alpha-D-glucopyranoside ligase.